The chain runs to 324 residues: Glyoxylate/hydroxypyruvate reductase B (324 aa).

Active-site residues include Arg237 and Glu266. The active-site Proton donor is His285.

It belongs to the D-isomer specific 2-hydroxyacid dehydrogenase family. GhrB subfamily. Homodimer.

Its subcellular location is the cytoplasm. The enzyme catalyses glycolate + NADP(+) = glyoxylate + NADPH + H(+). It catalyses the reaction (R)-glycerate + NAD(+) = 3-hydroxypyruvate + NADH + H(+). The catalysed reaction is (R)-glycerate + NADP(+) = 3-hydroxypyruvate + NADPH + H(+). Catalyzes the NADPH-dependent reduction of glyoxylate and hydroxypyruvate into glycolate and glycerate, respectively. The sequence is that of Glyoxylate/hydroxypyruvate reductase B from Citrobacter koseri (strain ATCC BAA-895 / CDC 4225-83 / SGSC4696).